A 946-amino-acid polypeptide reads, in one-letter code: Translation initiation factor IF-2 (946 aa).

Disordered stretches follow at residues Ala58–Ile250 and Val301–Ser324. Composition is skewed to low complexity over residues Glu102–Ala165 and Ala174–Gln185. A compositionally biased stretch (pro residues) spans Pro186–Arg211. Residues Pro212 to Gln229 are compositionally biased toward low complexity. Positions Ile445–Lys614 constitute a tr-type G domain. Residues Gly454–Thr461 are G1. Gly454 to Thr461 contributes to the GTP binding site. Residues Gly479–His483 are G2. The segment at Asp500–Gly503 is G3. Residues Asp500–His504 and Asn554–Asp557 contribute to the GTP site. Positions Asn554–Asp557 are G4. The interval Ser590–Arg592 is G5.

It belongs to the TRAFAC class translation factor GTPase superfamily. Classic translation factor GTPase family. IF-2 subfamily.

It is found in the cytoplasm. In terms of biological role, one of the essential components for the initiation of protein synthesis. Protects formylmethionyl-tRNA from spontaneous hydrolysis and promotes its binding to the 30S ribosomal subunits. Also involved in the hydrolysis of GTP during the formation of the 70S ribosomal complex. This Anaeromyxobacter sp. (strain K) protein is Translation initiation factor IF-2.